The sequence spans 466 residues: Cysteine--tRNA ligase (466 aa).

Position 33 (cysteine 33) interacts with Zn(2+). Positions 35–45 match the 'HIGH' region motif; sequence PTVYDFAHIGN. Residues cysteine 221, histidine 246, and glutamate 250 each coordinate Zn(2+). The 'KMSKS' region motif lies at 279-283; that stretch reads KMSKS. Lysine 282 lines the ATP pocket.

The protein belongs to the class-I aminoacyl-tRNA synthetase family. As to quaternary structure, monomer. Requires Zn(2+) as cofactor.

It is found in the cytoplasm. The catalysed reaction is tRNA(Cys) + L-cysteine + ATP = L-cysteinyl-tRNA(Cys) + AMP + diphosphate. The chain is Cysteine--tRNA ligase from Sinorhizobium medicae (strain WSM419) (Ensifer medicae).